A 206-amino-acid polypeptide reads, in one-letter code: Thiamine-phosphate synthase (206 aa).

4-amino-2-methyl-5-(diphosphooxymethyl)pyrimidine contacts are provided by residues 35–39 (QLRDK) and Asn-67. The Mg(2+) site is built by Asp-68 and Asp-87. Residue Ser-106 participates in 4-amino-2-methyl-5-(diphosphooxymethyl)pyrimidine binding. 132–134 (TGT) contacts 2-[(2R,5Z)-2-carboxy-4-methylthiazol-5(2H)-ylidene]ethyl phosphate. Lys-135 serves as a coordination point for 4-amino-2-methyl-5-(diphosphooxymethyl)pyrimidine. Residues Gly-163 and 183–184 (IS) each bind 2-[(2R,5Z)-2-carboxy-4-methylthiazol-5(2H)-ylidene]ethyl phosphate.

It belongs to the thiamine-phosphate synthase family. Mg(2+) serves as cofactor.

It catalyses the reaction 2-[(2R,5Z)-2-carboxy-4-methylthiazol-5(2H)-ylidene]ethyl phosphate + 4-amino-2-methyl-5-(diphosphooxymethyl)pyrimidine + 2 H(+) = thiamine phosphate + CO2 + diphosphate. The catalysed reaction is 2-(2-carboxy-4-methylthiazol-5-yl)ethyl phosphate + 4-amino-2-methyl-5-(diphosphooxymethyl)pyrimidine + 2 H(+) = thiamine phosphate + CO2 + diphosphate. The enzyme catalyses 4-methyl-5-(2-phosphooxyethyl)-thiazole + 4-amino-2-methyl-5-(diphosphooxymethyl)pyrimidine + H(+) = thiamine phosphate + diphosphate. It participates in cofactor biosynthesis; thiamine diphosphate biosynthesis; thiamine phosphate from 4-amino-2-methyl-5-diphosphomethylpyrimidine and 4-methyl-5-(2-phosphoethyl)-thiazole: step 1/1. Functionally, condenses 4-methyl-5-(beta-hydroxyethyl)thiazole monophosphate (THZ-P) and 2-methyl-4-amino-5-hydroxymethyl pyrimidine pyrophosphate (HMP-PP) to form thiamine monophosphate (TMP). This chain is Thiamine-phosphate synthase, found in Methanospirillum hungatei JF-1 (strain ATCC 27890 / DSM 864 / NBRC 100397 / JF-1).